The sequence spans 372 residues: Fork head domain-containing protein FD4 (372 aa).

A DNA-binding region (fork-head) is located at residues 12–103; that stretch reads QKPPYSYISL…FDMFENGSLL (92 aa). 2 disordered regions span residues 225–245 and 261–281; these read ESLITPDKPEHPSEDEDDEDD and PTTPAASEEYMSASRSSRTED.

As to expression, expressed in early embryogenesis in 14 symmetrical pairs of segmentally arranged neuroblasts. Also, later in embryogenesis, in a cluster of cells in head region.

The protein localises to the nucleus. Involved in development during embryogenesis. The chain is Fork head domain-containing protein FD4 (fd96Ca) from Drosophila melanogaster (Fruit fly).